The chain runs to 102 residues: Small ribosomal subunit protein uS14 (102 aa).

Belongs to the universal ribosomal protein uS14 family. In terms of assembly, part of the 30S ribosomal subunit. Contacts proteins S3 and S10.

Its function is as follows. Binds 16S rRNA, required for the assembly of 30S particles and may also be responsible for determining the conformation of the 16S rRNA at the A site. This is Small ribosomal subunit protein uS14 from Dichelobacter nodosus (strain VCS1703A).